The primary structure comprises 491 residues: 2,3-bisphosphoglycerate-independent phosphoglycerate mutase (491 aa).

Mn(2+) contacts are provided by Asp-11 and Ser-61. The Phosphoserine intermediate role is filled by Ser-61. Residues His-118, 147–148 (RD), Arg-177, Arg-183, 248–251 (RSDR), and Lys-320 each bind substrate. Mn(2+) contacts are provided by Asp-386, His-390, Asp-427, His-428, and His-445.

Belongs to the BPG-independent phosphoglycerate mutase family. Monomer. The cofactor is Mn(2+).

The catalysed reaction is (2R)-2-phosphoglycerate = (2R)-3-phosphoglycerate. Its pathway is carbohydrate degradation; glycolysis; pyruvate from D-glyceraldehyde 3-phosphate: step 3/5. In terms of biological role, catalyzes the interconversion of 2-phosphoglycerate and 3-phosphoglycerate. The protein is 2,3-bisphosphoglycerate-independent phosphoglycerate mutase of Sulfurimonas denitrificans (strain ATCC 33889 / DSM 1251) (Thiomicrospira denitrificans (strain ATCC 33889 / DSM 1251)).